The following is a 441-amino-acid chain: Phenylalanine-4-hydroxylase (441 aa).

Residues 23-102 (FSISKGSDKI…KATTLQESSN (80 aa)) enclose the ACT domain. Residues His-273, His-278, and Glu-318 each contribute to the Fe cation site.

It belongs to the biopterin-dependent aromatic amino acid hydroxylase family. As to quaternary structure, homotetramer. Fe(2+) serves as cofactor.

The catalysed reaction is (6R)-L-erythro-5,6,7,8-tetrahydrobiopterin + L-phenylalanine + O2 = (4aS,6R)-4a-hydroxy-L-erythro-5,6,7,8-tetrahydrobiopterin + L-tyrosine. It carries out the reaction (6R)-L-erythro-5,6,7,8-tetrahydrobiopterin + L-tryptophan + O2 = 5-hydroxy-L-tryptophan + (4aS,6R)-4a-hydroxy-L-erythro-5,6,7,8-tetrahydrobiopterin. It functions in the pathway amino-acid degradation; L-phenylalanine degradation; acetoacetate and fumarate from L-phenylalanine: step 1/6. Functionally, catalyzes the hydroxylation of L-phenylalanine. Hydroxylates L-tryptophan to 5-hydroxy-L-tryptophan but does not hydroxylate L-tyrosine to L-DOPA. It uses D-threo-tetrahydrodictyopterin (DH4), also known as dictyoperin, as a cofactor. The chain is Phenylalanine-4-hydroxylase (pah) from Dictyostelium discoideum (Social amoeba).